Here is a 365-residue protein sequence, read N- to C-terminus: Probable dual-specificity RNA methyltransferase RlmN (365 aa).

Glutamate 108 functions as the Proton acceptor in the catalytic mechanism. In terms of domain architecture, Radical SAM core spans histidine 114–aspartate 347. Cysteines 121 and 352 form a disulfide. Residues cysteine 128, cysteine 132, and cysteine 135 each coordinate [4Fe-4S] cluster. S-adenosyl-L-methionine is bound by residues glycine 178–glutamate 179, serine 210, serine 233–histidine 235, and asparagine 309. Cysteine 352 acts as the S-methylcysteine intermediate in catalysis.

This sequence belongs to the radical SAM superfamily. RlmN family. It depends on [4Fe-4S] cluster as a cofactor.

It localises to the cytoplasm. It carries out the reaction adenosine(2503) in 23S rRNA + 2 reduced [2Fe-2S]-[ferredoxin] + 2 S-adenosyl-L-methionine = 2-methyladenosine(2503) in 23S rRNA + 5'-deoxyadenosine + L-methionine + 2 oxidized [2Fe-2S]-[ferredoxin] + S-adenosyl-L-homocysteine. The catalysed reaction is adenosine(37) in tRNA + 2 reduced [2Fe-2S]-[ferredoxin] + 2 S-adenosyl-L-methionine = 2-methyladenosine(37) in tRNA + 5'-deoxyadenosine + L-methionine + 2 oxidized [2Fe-2S]-[ferredoxin] + S-adenosyl-L-homocysteine. Functionally, specifically methylates position 2 of adenine 2503 in 23S rRNA and position 2 of adenine 37 in tRNAs. The chain is Probable dual-specificity RNA methyltransferase RlmN from Geobacillus kaustophilus (strain HTA426).